Consider the following 1235-residue polypeptide: ATP-dependent DNA helicase mph1 (1235 aa).

2 disordered regions span residues 20–78 (LTQA…YRIH) and 96–148 (DEMP…VHSP). Positions 61–72 (SRSDNDEADEKK) are enriched in basic and acidic residues. Positions 137–148 (AKTQKQNIVHSP) are enriched in polar residues. The 169-residue stretch at 272-440 (IVHKGLFNNL…EVIDNLEIAE (169 aa)) folds into the Helicase ATP-binding domain. 285–292 (LPTGLGKT) contacts ATP. The short motif at 388 to 391 (DEAH) is the DEAH box element. One can recognise a Helicase C-terminal domain in the interval 608–784 (KLTYLCDTVL…GSRFTFRHDL (177 aa)). 3 disordered regions span residues 808–827 (NTQD…RKKL), 944–1117 (SRLQ…PPLM), and 1144–1235 (TGAK…DSDE). Over residues 947 to 958 (QRPEDRDNKPYG) the composition is skewed to basic and acidic residues. Over residues 1015–1027 (VAPKKAKPRRGRA) the composition is skewed to basic residues. Residues 1065–1074 (PGERVDRTSD) show a composition bias toward basic and acidic residues. Residues 1075–1085 (MEELEADDDSD) show a composition bias toward acidic residues. Polar residues-rich tracts occupy residues 1095–1114 (PTQT…SSSP) and 1146–1159 (AKNS…MTQE). Over residues 1160–1170 (SSDGGDSMDSD) the composition is skewed to low complexity. The segment covering 1194–1209 (PSSSVFSSGQKATPNM) has biased composition (polar residues).

Belongs to the DEAD box helicase family. DEAH subfamily. FANCM sub-subfamily. In terms of assembly, interacts with the MHF histone-fold complex to form the FANCM-MHF complex.

The protein resides in the nucleus. The catalysed reaction is ATP + H2O = ADP + phosphate + H(+). Functionally, ATP-dependent DNA helicase involved in DNA damage repair by homologous recombination and in genome maintenance. Capable of unwinding D-loops. Plays a role in limiting crossover recombinants during mitotic DNA double-strand break (DSB) repair. Component of a FANCM-MHF complex which promotes gene conversion at blocked replication forks, probably by reversal of the stalled fork. The chain is ATP-dependent DNA helicase mph1 from Sclerotinia sclerotiorum (strain ATCC 18683 / 1980 / Ss-1) (White mold).